A 121-amino-acid chain; its full sequence is Large ribosomal subunit protein uL22 (121 aa).

This sequence belongs to the universal ribosomal protein uL22 family. Part of the 50S ribosomal subunit.

Its function is as follows. This protein binds specifically to 23S rRNA; its binding is stimulated by other ribosomal proteins, e.g. L4, L17, and L20. It is important during the early stages of 50S assembly. It makes multiple contacts with different domains of the 23S rRNA in the assembled 50S subunit and ribosome. Functionally, the globular domain of the protein is located near the polypeptide exit tunnel on the outside of the subunit, while an extended beta-hairpin is found that lines the wall of the exit tunnel in the center of the 70S ribosome. In Beutenbergia cavernae (strain ATCC BAA-8 / DSM 12333 / CCUG 43141 / JCM 11478 / NBRC 16432 / NCIMB 13614 / HKI 0122), this protein is Large ribosomal subunit protein uL22.